The following is a 372-amino-acid chain: 4-hydroxy-3-methylbut-2-en-1-yl diphosphate synthase (flavodoxin) (372 aa).

Residues Cys-270, Cys-273, Cys-305, and Glu-312 each coordinate [4Fe-4S] cluster.

This sequence belongs to the IspG family. [4Fe-4S] cluster serves as cofactor.

The catalysed reaction is (2E)-4-hydroxy-3-methylbut-2-enyl diphosphate + oxidized [flavodoxin] + H2O + 2 H(+) = 2-C-methyl-D-erythritol 2,4-cyclic diphosphate + reduced [flavodoxin]. The protein operates within isoprenoid biosynthesis; isopentenyl diphosphate biosynthesis via DXP pathway; isopentenyl diphosphate from 1-deoxy-D-xylulose 5-phosphate: step 5/6. Its function is as follows. Converts 2C-methyl-D-erythritol 2,4-cyclodiphosphate (ME-2,4cPP) into 1-hydroxy-2-methyl-2-(E)-butenyl 4-diphosphate. This is 4-hydroxy-3-methylbut-2-en-1-yl diphosphate synthase (flavodoxin) from Salmonella choleraesuis (strain SC-B67).